The following is a 380-amino-acid chain: Queuine tRNA-ribosyltransferase (380 aa).

Catalysis depends on Asp-96, which acts as the Proton acceptor. Substrate-binding positions include 96–100, Asp-150, Gln-193, and Gly-220; that span reads DSGGF. Positions 251-257 are RNA binding; that stretch reads GVGAPDS. Catalysis depends on Asp-270, which acts as the Nucleophile. The tract at residues 275-279 is RNA binding; important for wobble base 34 recognition; it reads TRIAR. Zn(2+) contacts are provided by Cys-308, Cys-310, Cys-313, and His-339.

It belongs to the queuine tRNA-ribosyltransferase family. As to quaternary structure, homodimer. Within each dimer, one monomer is responsible for RNA recognition and catalysis, while the other monomer binds to the replacement base PreQ1. Zn(2+) serves as cofactor.

The catalysed reaction is 7-aminomethyl-7-carbaguanine + guanosine(34) in tRNA = 7-aminomethyl-7-carbaguanosine(34) in tRNA + guanine. It functions in the pathway tRNA modification; tRNA-queuosine biosynthesis. Its function is as follows. Catalyzes the base-exchange of a guanine (G) residue with the queuine precursor 7-aminomethyl-7-deazaguanine (PreQ1) at position 34 (anticodon wobble position) in tRNAs with GU(N) anticodons (tRNA-Asp, -Asn, -His and -Tyr). Catalysis occurs through a double-displacement mechanism. The nucleophile active site attacks the C1' of nucleotide 34 to detach the guanine base from the RNA, forming a covalent enzyme-RNA intermediate. The proton acceptor active site deprotonates the incoming PreQ1, allowing a nucleophilic attack on the C1' of the ribose to form the product. After dissociation, two additional enzymatic reactions on the tRNA convert PreQ1 to queuine (Q), resulting in the hypermodified nucleoside queuosine (7-(((4,5-cis-dihydroxy-2-cyclopenten-1-yl)amino)methyl)-7-deazaguanosine). This Streptococcus pneumoniae (strain ATCC BAA-255 / R6) protein is Queuine tRNA-ribosyltransferase.